A 94-amino-acid chain; its full sequence is uncharacterized protein (94 aa).

This is an uncharacterized protein from Escherichia coli (strain K12).